A 162-amino-acid polypeptide reads, in one-letter code: NADH-quinone oxidoreductase subunit I (162 aa).

4Fe-4S ferredoxin-type domains follow at residues 53–83 and 93–122; these read LRRY…IEAE and TRYD…EGPN. Positions 63, 66, 69, 73, 102, 105, 108, and 112 each coordinate [4Fe-4S] cluster.

The protein belongs to the complex I 23 kDa subunit family. As to quaternary structure, NDH-1 is composed of 14 different subunits. Subunits NuoA, H, J, K, L, M, N constitute the membrane sector of the complex. [4Fe-4S] cluster is required as a cofactor.

The protein localises to the cell inner membrane. The catalysed reaction is a quinone + NADH + 5 H(+)(in) = a quinol + NAD(+) + 4 H(+)(out). Functionally, NDH-1 shuttles electrons from NADH, via FMN and iron-sulfur (Fe-S) centers, to quinones in the respiratory chain. The immediate electron acceptor for the enzyme in this species is believed to be ubiquinone. Couples the redox reaction to proton translocation (for every two electrons transferred, four hydrogen ions are translocated across the cytoplasmic membrane), and thus conserves the redox energy in a proton gradient. The protein is NADH-quinone oxidoreductase subunit I of Granulibacter bethesdensis (strain ATCC BAA-1260 / CGDNIH1).